Here is a 2515-residue protein sequence, read N- to C-terminus: Zinc finger FYVE domain-containing protein 26 (2515 aa).

Disordered regions lie at residues 520–540, 586–634, 672–696, and 718–800; these read GPSD…SSPG, PHLP…EPHG, SSRG…DGLQ, and SIQG…SSLI. Positions 623–634 are enriched in basic and acidic residues; it reads PEPKDSSPEPHG. A compositionally biased stretch (basic residues) spans 738-748; it reads PSLRRGRRTRK. The span at 749–758 shows a compositional bias: basic and acidic residues; sequence SRADDQDKGS. Positions 759-783 are enriched in low complexity; the sequence is RSSLENTSSELSTSTSEGSLSAASG. The residue at position 774 (S774) is a Phosphoserine. The stretch at 842–869 forms a coiled coil; that stretch reads MFMERYQEVIQELAQVEHKIENQNSDGG. A disordered region spans residues 1253–1273; that stretch reads TENPTLERKPPSSPRDSSPPA. A phosphoserine mark is found at S1718, S1740, S1756, and S1758. Residues 1740–1760 are disordered; the sequence is SAEFSSATAPGVSTVHSPSVR. The segment at 1788 to 1848 adopts an FYVE-type zinc-finger fold; it reads DESESVCMVC…VCDQCYSYFN (61 aa). 8 residues coordinate Zn(2+): C1794, C1797, C1811, C1814, C1819, C1822, C1840, and C1843.

Belongs to the ZFYVE26 family. As to quaternary structure, interacts with AP5Z1, AP5B1, AP5S1 and SPG11. Interacts with TTC19 and KIF13A.

It localises to the cytoplasm. The protein localises to the cytoskeleton. Its subcellular location is the microtubule organizing center. It is found in the centrosome. The protein resides in the midbody. In terms of biological role, phosphatidylinositol 3-phosphate-binding protein required for the abscission step in cytokinesis: recruited to the midbody during cytokinesis and acts as a regulator of abscission. May also be required for efficient homologous recombination DNA double-strand break repair. The sequence is that of Zinc finger FYVE domain-containing protein 26 (ZFYVE26) from Bos taurus (Bovine).